A 256-amino-acid polypeptide reads, in one-letter code: Peptidyl-prolyl cis-trans isomerase FKBP19, chloroplastic (256 aa).

Residues 1-29 (MASISSFGCFPQSTALAGTSSTTRCRTTV) constitute a chloroplast transit peptide. The N-terminal 59 residues, 30 to 88 (AARLADQSDDFAPLRSSGGNCGCVNNSGEFDRRKLLVSSVGLLIGALSYDSKDGDFASA), are a transit peptide targeting the thylakoid. The region spanning 135-254 (GDKVVVDWDG…LFDVELLKIV (120 aa)) is the PPIase FKBP-type domain. Residue Ser164 is modified to Phosphoserine.

It belongs to the FKBP-type PPIase family.

The protein resides in the plastid. It is found in the chloroplast thylakoid lumen. The catalysed reaction is [protein]-peptidylproline (omega=180) = [protein]-peptidylproline (omega=0). PPIases accelerate the folding of proteins. It catalyzes the cis-trans isomerization of proline imidic peptide bonds in oligopeptides. The sequence is that of Peptidyl-prolyl cis-trans isomerase FKBP19, chloroplastic (FKBP19) from Arabidopsis thaliana (Mouse-ear cress).